Here is a 433-residue protein sequence, read N- to C-terminus: Mitochondrial distribution and morphology protein 12 (433 aa).

The region spanning 1–433 (MSIDIDWERA…VYPSFWTFLI (433 aa)) is the SMP-LTD domain. Disordered regions lie at residues 62-113 (LSDP…GGQM), 180-279 (TPLG…RMRE), and 356-376 (GPETAAGSGGGDTLEPNSPRR). Basic and acidic residues predominate over residues 81-96 (SEERSPTREPVDRYGN). The span at 214–236 (SAQSRPSTANTGNTLPSRDSMSV) shows a compositional bias: polar residues. The segment covering 268-279 (PLDDTPPRRMRE) has biased composition (basic and acidic residues).

It belongs to the MDM12 family. In terms of assembly, component of the ER-mitochondria encounter structure (ERMES) or MDM complex, composed of MMM1, MDM10, MDM12 and MDM34. An MMM1 homodimer associates with one molecule of MDM12 on each side in a pairwise head-to-tail manner, and the SMP-LTD domains of MMM1 and MDM12 generate a continuous hydrophobic tunnel for phospholipid trafficking.

It is found in the mitochondrion outer membrane. The protein localises to the endoplasmic reticulum membrane. In terms of biological role, component of the ERMES/MDM complex, which serves as a molecular tether to connect the endoplasmic reticulum (ER) and mitochondria. Components of this complex are involved in the control of mitochondrial shape and protein biogenesis, and function in nonvesicular lipid trafficking between the ER and mitochondria. MDM12 is required for the interaction of the ER-resident membrane protein MMM1 and the outer mitochondrial membrane-resident beta-barrel protein MDM10. The MDM12-MMM1 subcomplex functions in the major beta-barrel assembly pathway that is responsible for biogenesis of all mitochondrial outer membrane beta-barrel proteins, and acts in a late step after the SAM complex. The MDM10-MDM12-MMM1 subcomplex further acts in the TOM40-specific pathway after the action of the MDM12-MMM1 complex. Essential for establishing and maintaining the structure of mitochondria and maintenance of mtDNA nucleoids. The sequence is that of Mitochondrial distribution and morphology protein 12 from Ajellomyces capsulatus (strain NAm1 / WU24) (Darling's disease fungus).